The sequence spans 213 residues: Serine protease inhibitor 5 (213 aa).

Residues 1 to 22 (MKCLFLLCLCLVPIVVFSSTFT) form the signal peptide. Positions 23–28 (SQNPIN) are excised as a propeptide. Positions 25 to 30 (NPINLP) match the Vacuolar targeting signal motif. 2 disulfide bridges follow: cysteine 76/cysteine 125 and cysteine 174/cysteine 183.

Belongs to the protease inhibitor I3 (leguminous Kunitz-type inhibitor) family.

The protein localises to the vacuole. Its function is as follows. Inhibitor of trypsin (serine protease). Protects the plant by inhibiting proteases of invading organisms. The polypeptide is Serine protease inhibitor 5 (Solanum tuberosum (Potato)).